A 37-amino-acid polypeptide reads, in one-letter code: Large ribosomal subunit protein bL36A (37 aa).

It belongs to the bacterial ribosomal protein bL36 family.

This is Large ribosomal subunit protein bL36A from Actinobacillus pleuropneumoniae serotype 5b (strain L20).